A 272-amino-acid chain; its full sequence is Type III pantothenate kinase (272 aa).

Residue 6-13 (DVRNTHTV) participates in ATP binding. Position 109–112 (109–112 (GADR)) interacts with substrate. Catalysis depends on Asp111, which acts as the Proton acceptor. Asp131 contacts K(+). Position 134 (Ser134) interacts with ATP. Residue Thr186 coordinates substrate.

It belongs to the type III pantothenate kinase family. As to quaternary structure, homodimer. NH4(+) is required as a cofactor. K(+) serves as cofactor.

Its subcellular location is the cytoplasm. It catalyses the reaction (R)-pantothenate + ATP = (R)-4'-phosphopantothenate + ADP + H(+). It functions in the pathway cofactor biosynthesis; coenzyme A biosynthesis; CoA from (R)-pantothenate: step 1/5. Functionally, catalyzes the phosphorylation of pantothenate (Pan), the first step in CoA biosynthesis. This Mycobacterium marinum (strain ATCC BAA-535 / M) protein is Type III pantothenate kinase.